Here is a 470-residue protein sequence, read N- to C-terminus: Argininosuccinate lyase (470 aa).

The protein belongs to the lyase 1 family. Argininosuccinate lyase subfamily.

The protein resides in the cytoplasm. It carries out the reaction 2-(N(omega)-L-arginino)succinate = fumarate + L-arginine. The protein operates within amino-acid biosynthesis; L-arginine biosynthesis; L-arginine from L-ornithine and carbamoyl phosphate: step 3/3. The polypeptide is Argininosuccinate lyase (Leptospira borgpetersenii serovar Hardjo-bovis (strain L550)).